A 186-amino-acid chain; its full sequence is Potassium-transporting ATPase KdpC subunit (186 aa).

Residues 10–30 (LTIITMVLCGFLFPLAITLIG) traverse the membrane as a helical segment.

This sequence belongs to the KdpC family. In terms of assembly, the system is composed of three essential subunits: KdpA, KdpB and KdpC.

It is found in the cell membrane. Its function is as follows. Part of the high-affinity ATP-driven potassium transport (or Kdp) system, which catalyzes the hydrolysis of ATP coupled with the electrogenic transport of potassium into the cytoplasm. This subunit acts as a catalytic chaperone that increases the ATP-binding affinity of the ATP-hydrolyzing subunit KdpB by the formation of a transient KdpB/KdpC/ATP ternary complex. This chain is Potassium-transporting ATPase KdpC subunit, found in Staphylococcus aureus (strain MRSA252).